We begin with the raw amino-acid sequence, 1288 residues long: MGGCFCIPRERSLTRGPGKETPSKDPTVSSECIASSEYKEKCFLPQNINPDLTLSFCVKSRSRRCVNGPLQEAARRRLWALENEDQEVRMLFKDLSARLVSIQSQRAQFLITFKTMEEIWKFSTYLNLGYVSMCLEHLLFDHKYWLNCILVEDTEIQVSVDDKHLETIYLGLLIQEGHFFCRALCSVTPPAEKEGECLTLCKNELISVKMAEAGSELEGVSLVTGQRGLVLVSALEPLPLPFHQWFLKNYPGSCGLSRKRDWTGSYQIGRGRCKALTGYEPGEKDELNFYQGESIEIIGFVIPGLQWFIGKSTSSGQVGFVPTRNIDPDSYSPMSRNSAFLSDEERCSLLALGSDKQTECSSFLHTLARTDITSVYRLSGFESIQNPPNDLSASQPEGFKEVRPGRAWEEHQAVGSRQSSSSEDSSLEEELLSATSDSYRLPEPDDLDDPELLMDLSTGQEEEAENFAPILAFLDHEGYADHFKSLYDFSFSFLTSSFYSFSEEDEFVAYLEASRKWAKKSHMTWAHARLCFLLGRLSIRKVKLSQARVYFEEAIHILNGAFEDLSLVATLYINLAAIYLKQRLRHKGSALLEKAGALLACLPDRESSAKHELDVVAYVLRQGIVVGSSPLEARACFLAIRLLLSLGRHEEVLPFAERLQLLSGHPPASEAVASVLSFLYDKKYLPHLAVASVQQHGIQSAQGMSLPIWQVHLVLQNTTKLLGFPSPGWGEVSALACPMLRQALAACEELADRSTQRALCLILSKVYLEHRSPDGAIHYLSQALVLGQLLGEQESFESSLCLAWAYLLASQAKKALDVLEPLLCSLKETESLTQRGVIYNLLGLALQGEGRVNRAAKSYLRALNRAQEVGDVHNQAVAMANLGHLSLKSWAQHPARNYLLQAVRLYCELQASKETDMELVQVFLWLAQVLVSGHQLTHGLLCYEMALLFGLRHRHLKSQLQATKSLCHFYSSVSPNPEACITYHEHWLALAQQLRDREMEGRLLESLGQLYRNLNTARSLRRSLTCIKESLRIFIDLGETDKAAEAWLGAGRLHYLMQEDELVELCLQAAIQTALKSEEPLLALKLYEEAGDVFFNGTRHRHHAVEYYRAGAVPLARRLKAVRTELRIFNKLTELQISLEGYEKALEFATLAARLSTVTGDQRQELVAFHRLATVYYSLHMYEMAEDCYLKTLSLCPPWLQSPKEALYYAKVYYRLGRLTFCQLKDAHDATEYFLLALAAAVLLGDEELQDTIRSRLDNICQSPLWHSRPSGCSSERARWLSGGGLAL.

SH3 domains follow at residues 176–240 (EGHF…PLPL) and 268–331 (IGRG…PDSY). Residues 386–395 (NPPNDLSASQ) show a composition bias toward polar residues. Disordered stretches follow at residues 386-405 (NPPN…VRPG) and 410-444 (EHQA…LPEP). TPR repeat units follow at residues 528 to 561 (ARLC…LNGA), 757 to 790 (RALC…GQLL), 836 to 869 (GVIY…AQEV), 1001 to 1037 (GRLL…FIDL), 1084 to 1118 (LKLY…LARR), 1119 to 1152 (LKAV…ATLA), 1166 to 1199 (LVAF…CPPW), and 1210 to 1244 (AKVY…AVLL).

Strongly expressed in brain and spinal cord. Expressed at equal level in spinal cord and sciatic nerve. Weakly expressed in striated muscle.

This chain is SH3 domain and tetratricopeptide repeat-containing protein 2 (SH3TC2), found in Homo sapiens (Human).